We begin with the raw amino-acid sequence, 144 residues long: MGVAAVCRSFGSDASSNLIPLRISFFFKNASISFRSLFSSVNSSSWFKRDTQYSSVSFLSLSSIKSSALGNLLLSLLWSSLSDAELGTAELGREDIFEAETVLLIMMSLNNLYILSVRRLTPTGNSRPLKISRLQQVRKNPYPF.

This is an uncharacterized protein from Saccharomyces cerevisiae (strain ATCC 204508 / S288c) (Baker's yeast).